The chain runs to 284 residues: MAADTPVEYIKHHLTNLTYGKLPEGYERADGSVVQEATWTFARTGQEATDMGFMAIHVDTLGWSIAMGILFLGLFRFVANRVTEGTPSGLQNLIEMTFEFVQGIVRDVFHGKNPLIAPLALTIFVWILLMNILKLIPIDYIPSIAHALGLEYFKIVPTTDPNATFGMSIGVFLLILFYSFKVKGVSGFSKELAFNPFNHWIMIPFNLLLEILALIIKPISLALRLFGNMYAGEVVFILIALLPLWIQWTLNVPWAIFHILVIPLQAFIFTVLTVVYLSAAHEDH.

Helical transmembrane passes span 55–75 (AIHVDTLGWSIAMGILFLGLF), 116–136 (IAPLALTIFVWILLMNILKLI), 165–185 (FGMSIGVFLLILFYSFKVKGV), 196–216 (PFNHWIMIPFNLLLEILALII), 234–254 (VVFILIALLPLWIQWTLNVPW), and 255–275 (AIFHILVIPLQAFIFTVLTVV).

The protein belongs to the ATPase A chain family. As to quaternary structure, F-type ATPases have 2 components, CF(1) - the catalytic core - and CF(0) - the membrane proton channel. CF(1) has five subunits: alpha(3), beta(3), gamma(1), delta(1), epsilon(1). CF(0) has three main subunits: a(1), b(2) and c(9-12). The alpha and beta chains form an alternating ring which encloses part of the gamma chain. CF(1) is attached to CF(0) by a central stalk formed by the gamma and epsilon chains, while a peripheral stalk is formed by the delta and b chains.

The protein resides in the cell inner membrane. Its function is as follows. Key component of the proton channel; it plays a direct role in the translocation of protons across the membrane. This chain is ATP synthase subunit a, found in Marinobacter nauticus (strain ATCC 700491 / DSM 11845 / VT8) (Marinobacter aquaeolei).